The primary structure comprises 519 residues: Circadian clock oscillator protein KaiC 1 (519 aa).

KaiC domains are found at residues 1-248 (MNLP…INIF) and 262-519 (ARIS…KTAE). Residues G50, T51, G52, K53, T54, L55, S90, K225, L226, R227, T229, H231, T241, T291, G292, T293, G294, K295, T296, and L297 each coordinate ATP. T54 provides a ligand contact to Mg(2+). T296 lines the Mg(2+) pocket. A Mg(2+)-binding site is contributed by E319. W332 lines the ATP pocket. At S432 the chain carries Phosphoserine; by autocatalysis. Phosphothreonine; by autocatalysis is present on T433. R452, K458, M459, R460, S462, H464, and K466 together coordinate ATP.

The protein belongs to the KaiC family. As to quaternary structure, homohexamer; hexamerization is dependent on ATP-binding. Core component of the KaiABC complex, at least composed of a KaiC homohexamer, a KaiB dimer and two KaiA dimers. Interacts directly with SasA. Multimerizes, probably forming homohexamers, no interaction with KaiC2 or KaiC3 is seen. Interacts with KaiA. In another study interacts with itself, KaiB1, KaiB3 and KaiC3. Interacts with SasA (hik8). It depends on Mg(2+) as a cofactor. In terms of processing, phosphorylated on serine and threonine residues by autocatalysis. Has a 4 step phosphorylation cycle; the autokinase acts first on Thr-433, then Ser-432. When Ser-432 is modified KaiC switches to an autophosphatase mode, acting first on phospho-Thr-433 then phospho-Ser-432.

The catalysed reaction is L-seryl-[protein] + ATP = O-phospho-L-seryl-[protein] + ADP + H(+). It catalyses the reaction L-threonyl-[protein] + ATP = O-phospho-L-threonyl-[protein] + ADP + H(+). It carries out the reaction ATP + H2O = ADP + phosphate + H(+). The interaction with KaiA enhances its phosphorylation status, while the interaction with KaiB decreases it. Functionally, component of the oscillator and circadian clock in this organism, enhances fitness in a rhythmic environment. Autophosphorylates in the presence of KaiA, no activity is seen in its absence. Central component of the KaiABC oscillator complex, which constitutes the main circadian regulator in cyanobacteria. Complex composition changes during the circadian cycle to control KaiC phosphorylation. KaiA stimulates KaiC autophosphorylation, while KaiB sequesters KaiA, leading to KaiC autodephosphorylation. Clock output pathways impact the RpaA transcriptional regulator. KaiC enhances the autophosphorylation activity of SasA, which then transfers its phosphate group to RpaA to activate it. KaiB and KaiC together enhance the phospho-RpaA dephosphatase activity of CikA. Its function is as follows. Has a weak, temperature-independent ATPase activity; ATPase activity defines the circadian period. The phosphorylation state of KaiC modulates its ATPase activity and effects KaiB binding. This is Circadian clock oscillator protein KaiC 1 from Synechocystis sp. (strain ATCC 27184 / PCC 6803 / Kazusa).